We begin with the raw amino-acid sequence, 55 residues long: Large ribosomal subunit protein bL33 (55 aa).

It belongs to the bacterial ribosomal protein bL33 family.

This Buchnera aphidicola subsp. Baizongia pistaciae (strain Bp) protein is Large ribosomal subunit protein bL33.